The primary structure comprises 156 residues: Ribosomal RNA large subunit methyltransferase H (156 aa).

S-adenosyl-L-methionine is bound by residues leucine 73, glycine 104, and 123–128 (LSPLTL).

This sequence belongs to the RNA methyltransferase RlmH family. In terms of assembly, homodimer.

The protein localises to the cytoplasm. The catalysed reaction is pseudouridine(1915) in 23S rRNA + S-adenosyl-L-methionine = N(3)-methylpseudouridine(1915) in 23S rRNA + S-adenosyl-L-homocysteine + H(+). In terms of biological role, specifically methylates the pseudouridine at position 1915 (m3Psi1915) in 23S rRNA. The sequence is that of Ribosomal RNA large subunit methyltransferase H from Aliivibrio fischeri (strain ATCC 700601 / ES114) (Vibrio fischeri).